The chain runs to 178 residues: Mediator of RNA polymerase II transcription subunit 21 (178 aa).

The segment at 36–91 is disordered; it reads DDDDVNSYSNMAANAPLPQSQQQRQQQKKQQEPQQEIEQPQQQSNPESKSISPPKE. Over residues 67-85 the composition is skewed to low complexity; it reads EPQQEIEQPQQQSNPESKS. The stretch at 128–169 forms a coiled coil; it reads NEQMNLINELSDKLQAIEEERIQKIKEKDNLLNLLESMIKEV.

The protein belongs to the Mediator complex subunit 21 family. Component of the Mediator complex.

It is found in the nucleus. Component of the Mediator complex, a coactivator involved in the regulated transcription of nearly all RNA polymerase II-dependent genes. Mediator functions as a bridge to convey information from gene-specific regulatory proteins to the basal RNA polymerase II transcription machinery. Mediator is recruited to promoters by direct interactions with regulatory proteins and serves as a scaffold for the assembly of a functional preinitiation complex with RNA polymerase II and the general transcription factors. This Candida albicans (strain SC5314 / ATCC MYA-2876) (Yeast) protein is Mediator of RNA polymerase II transcription subunit 21 (SRB7).